The primary structure comprises 389 residues: Mitochondrial tRNA-specific 2-thiouridylase 1 (389 aa).

Residues 8 to 15 (GVSGGVDS) and M34 contribute to the ATP site. An interaction with target base in tRNA region spans residues 94 to 96 (NPD). The Nucleophile role is filled by C99. Cysteines 99 and 205 form a disulfide. Residue G124 participates in ATP binding. The interval 154 to 156 (KDQ) is interaction with tRNA. The active-site Cysteine persulfide intermediate is the C205. Residues 317 to 318 (QH) form an interaction with tRNA region.

It belongs to the MnmA/TRMU family.

It localises to the mitochondrion. The enzyme catalyses 5-taurinomethyluridine(34) in tRNA + S-sulfanyl-L-cysteinyl-[protein] + AH2 + ATP = 5-taurinomethyl-2-thiouridine(34) in tRNA + L-cysteinyl-[protein] + A + AMP + diphosphate + H(+). In terms of biological role, catalyzes the 2-thiolation of uridine at the wobble position (U34) of mitochondrial tRNA(Lys), tRNA(Glu) and tRNA(Gln). Required for the formation of 5-taurinomethyl-2-thiouridine (tm5s2U) of mitochondrial tRNA(Lys), tRNA(Glu), and tRNA(Gln) at the wobble position. ATP is required to activate the C2 atom of the wobble base. The sequence is that of Mitochondrial tRNA-specific 2-thiouridylase 1 from Drosophila melanogaster (Fruit fly).